The primary structure comprises 1104 residues: Partner and localizer of BRCA2 (1104 aa).

The tract at residues 1–157 (MEELSGKPLS…WEKSSVSQEK (157 aa)) is required for its oligomerization and is important for its focal concentration at DNA damage sites. Residues 1-195 (MEELSGKPLS…TPVSEKTHLL (195 aa)) form an interaction with RAD51 region. The tract at residues 1–308 (MEELSGKPLS…RAHGQLPGSP (308 aa)) is interaction with BRCA1. The stretch at 9–48 (LSYAEKEKLKEKLAFLKKEYSRTLARLQRAKRAEKAKNSK) forms a coiled coil. Positions 39–52 (KRAEKAKNSKKAIE) are enriched in basic and acidic residues. Disordered stretches follow at residues 39 to 91 (KRAE…TGEN), 122 to 157 (GQLLHSTSSPDGKKEQNTLPGTTKTPWEKSSVSQEK), and 243 to 272 (PSCTASNSNHSQHLEHTPPKSGCKITTQGP). Polar residues-rich tracts occupy residues 59–70 (EASSQLSHSESI) and 138–154 (NTLPGTTKTPWEKSSVS). Ser274 bears the Phosphoserine mark. The disordered stretch occupies residues 304–354 (LPGSPNSCSVNDLTHSNLPANSTPNSKSLKSPSNTVDERNEPLQEDEILGP). The span at 306–338 (GSPNSCSVNDLTHSNLPANSTPNSKSLKSPSNT) shows a compositional bias: polar residues. At Ser364 the chain carries Phosphoserine. Residues 374–424 (SCTMLEGLLFPAEYYVRTTRRMSDCQRKIALEAVIQSHLGVKKKELKKKTK) are chAM (Chromatin-association motif); required for chromatin association, mediates nucleosome association. 2 disordered regions span residues 417 to 494 (KELK…SART) and 581 to 730 (LQRD…TPLP). A Phosphoserine modification is found at Ser432. The segment covering 446–462 (TSTGQSSSGSLSQKLLS) has biased composition (low complexity). A compositionally biased stretch (basic residues) spans 483-492 (RGHRGKRKSA). Polar residues predominate over residues 664 to 713 (TLSTEAAQPCSTSQPPLLGDTNSLVNNSKQCNSSACSPKPDTNLQASGRQ). Positions 693–1104 (QCNSSACSPK…DGNIFIYRYF (412 aa)) are required for interaction with POLH and POLH DNA synthesis stimulation. The segment at 771–1104 (GNLQLVSELK…DGNIFIYRYF (334 aa)) is interaction with RAD51 and BRCA2. The segment at 771 to 1104 (GNLQLVSELK…DGNIFIYRYF (334 aa)) is interaction with RAD51, BRCA2 and POLH. WD repeat units follow at residues 772–833 (NLQL…WHFT), 835–879 (VPVL…QVLL), 880–927 (KSGD…LMPP), 928–970 (DETV…MHID), 976–1027 (SVCH…LLCS), 1033–1071 (AGRFLEGDVKDHVAAAVLTSGTIAIWDLLLGHCTALLPP), and 1073–1104 (SDQSWSLVKWSGTDSHLLAGQKDGNIFIYRYF).

As to quaternary structure, homooligomer; dissociated upon DNA damage thus allowing association with BRCA1. Oligomerization is essential for its focal accumulation at DNA breaks. Part of a BRCA complex containing BRCA1, BRCA2 and PALB2. Interacts with BRCA1 and this interaction is essential for its function in HRR. Interacts with RAD51AP1 and MORF4L1/MRG15. Component of the homologous recombination repair (HR) complex composed of ERCC5/XPG, BRCA2, PALB2, DSS1 and RAD51. Within the complex, interacts with ERCC5/XPG and BRCA2. Interacts with BRCA2, RAD51C, RAD51 and XRCC3; the interactions are direct and it may serve as a scaffold for a HR complex containing PALB2, BRCA2, RAD51C, RAD51 and XRCC3. Interacts with POLH; the interaction is direct.

It is found in the nucleus. Plays a critical role in homologous recombination repair (HRR) through its ability to recruit BRCA2 and RAD51 to DNA breaks. Strongly stimulates the DNA strand-invasion activity of RAD51, stabilizes the nucleoprotein filament against a disruptive BRC3-BRC4 polypeptide and helps RAD51 to overcome the suppressive effect of replication protein A (RPA). Functionally cooperates with RAD51AP1 in promoting of D-loop formation by RAD51. Serves as the molecular scaffold in the formation of the BRCA1-PALB2-BRCA2 complex which is essential for homologous recombination. Via its WD repeats is proposed to scaffold a HR complex containing RAD51C and BRCA2 which is thought to play a role in HR-mediated DNA repair. Essential partner of BRCA2 that promotes the localization and stability of BRCA2. Also enables its recombinational repair and checkpoint functions of BRCA2. May act by promoting stable association of BRCA2 with nuclear structures, allowing BRCA2 to escape the effects of proteasome-mediated degradation. Binds DNA with high affinity for D loop, which comprises single-stranded, double-stranded and branched DNA structures. May play a role in the extension step after strand invasion at replication-dependent DNA double-strand breaks; together with BRCA2 is involved in both POLH localization at collapsed replication forks and DNA polymerization activity. This chain is Partner and localizer of BRCA2 (Palb2), found in Mus musculus (Mouse).